A 115-amino-acid chain; its full sequence is uncharacterized protein (115 aa).

The protein belongs to the herpesviridae BLRF2 family.

This is an uncharacterized protein from Saimiriine herpesvirus 2 (strain 11) (SaHV-2).